A 360-amino-acid chain; its full sequence is Photosystem II protein D1 2 (360 aa).

The next 3 membrane-spanning stretches (helical) occupy residues 29-46 (YVGW…TATI), 118-133 (HFLI…EWEL), and 142-156 (WICV…AATA). His118 provides a ligand contact to chlorophyll a. Position 126 (Tyr126) interacts with pheophytin a. Residues Asp170 and Glu189 each contribute to the [CaMn4O5] cluster site. Residues 197–218 (FHMLGVAGVFGGSLFSAMHGSL) traverse the membrane as a helical segment. His198 is a chlorophyll a binding site. A quinone is bound by residues His215 and 264 to 265 (SF). A Fe cation-binding site is contributed by His215. Residue His272 coordinates Fe cation. Residues 274-288 (FLAAWPVVGIWFTSL) traverse the membrane as a helical segment. [CaMn4O5] cluster-binding residues include His332, Glu333, Asp342, and Ala344. Positions 345–360 (AGEATPVALTAPAING) are excised as a propeptide.

It belongs to the reaction center PufL/M/PsbA/D family. In terms of assembly, PSII is composed of 1 copy each of membrane proteins PsbA, PsbB, PsbC, PsbD, PsbE, PsbF, PsbH, PsbI, PsbJ, PsbK, PsbL, PsbM, PsbT, PsbX, PsbY, PsbZ, Psb30/Ycf12, peripheral proteins PsbO, CyanoQ (PsbQ), PsbU, PsbV and a large number of cofactors. It forms dimeric complexes. Requires The D1/D2 heterodimer binds P680, chlorophylls that are the primary electron donor of PSII, and subsequent electron acceptors. It shares a non-heme iron and each subunit binds pheophytin, quinone, additional chlorophylls, carotenoids and lipids. D1 provides most of the ligands for the Mn4-Ca-O5 cluster of the oxygen-evolving complex (OEC). There is also a Cl(-1) ion associated with D1 and D2, which is required for oxygen evolution. The PSII complex binds additional chlorophylls, carotenoids and specific lipids. as cofactor. Tyr-161 forms a radical intermediate that is referred to as redox-active TyrZ, YZ or Y-Z. In terms of processing, C-terminally processed by CtpA; processing is essential to allow assembly of the oxygen-evolving complex and thus photosynthetic growth.

It is found in the cellular thylakoid membrane. It catalyses the reaction 2 a plastoquinone + 4 hnu + 2 H2O = 2 a plastoquinol + O2. In terms of biological role, photosystem II (PSII) is a light-driven water:plastoquinone oxidoreductase that uses light energy to abstract electrons from H(2)O, generating O(2) and a proton gradient subsequently used for ATP formation. It consists of a core antenna complex that captures photons, and an electron transfer chain that converts photonic excitation into a charge separation. The D1/D2 (PsbA/PsbD) reaction center heterodimer binds P680, the primary electron donor of PSII as well as several subsequent electron acceptors. The protein is Photosystem II protein D1 2 of Synechococcus elongatus (strain ATCC 33912 / PCC 7942 / FACHB-805) (Anacystis nidulans R2).